The primary structure comprises 455 residues: Glutamate-1-semialdehyde 2,1-aminomutase (455 aa).

Lys-286 is subject to N6-(pyridoxal phosphate)lysine.

It belongs to the class-III pyridoxal-phosphate-dependent aminotransferase family. HemL subfamily. Homodimer. The cofactor is pyridoxal 5'-phosphate.

The protein resides in the cytoplasm. The enzyme catalyses (S)-4-amino-5-oxopentanoate = 5-aminolevulinate. Its pathway is porphyrin-containing compound metabolism; protoporphyrin-IX biosynthesis; 5-aminolevulinate from L-glutamyl-tRNA(Glu): step 2/2. This chain is Glutamate-1-semialdehyde 2,1-aminomutase, found in Clavibacter sepedonicus (Clavibacter michiganensis subsp. sepedonicus).